Consider the following 339-residue polypeptide: Uroporphyrinogen decarboxylase (339 aa).

Substrate-binding positions include 21–25 (RQAGR), phenylalanine 40, aspartate 71, tyrosine 147, serine 202, and histidine 315.

The protein belongs to the uroporphyrinogen decarboxylase family. Homodimer.

It is found in the cytoplasm. It catalyses the reaction uroporphyrinogen III + 4 H(+) = coproporphyrinogen III + 4 CO2. The protein operates within porphyrin-containing compound metabolism; protoporphyrin-IX biosynthesis; coproporphyrinogen-III from 5-aminolevulinate: step 4/4. Catalyzes the decarboxylation of four acetate groups of uroporphyrinogen-III to yield coproporphyrinogen-III. The chain is Uroporphyrinogen decarboxylase from Helicobacter pylori (strain ATCC 700392 / 26695) (Campylobacter pylori).